We begin with the raw amino-acid sequence, 393 residues long: RNA pseudouridine synthase 7 (393 aa).

The S4 RNA-binding domain maps to 49–118; it reads KTIVDLFTDE…GDITILQNEA (70 aa). The active site involves aspartate 162.

The protein belongs to the pseudouridine synthase RluA family.

It carries out the reaction a uridine in RNA = a pseudouridine in RNA. The polypeptide is RNA pseudouridine synthase 7 (Oryza sativa subsp. japonica (Rice)).